A 73-amino-acid polypeptide reads, in one-letter code: MSPLAWLLSLPVRAYRLIFSPWVGFNCRYDPTCSAYAMEALRKHGGVKGGWLTLRRILRCHPWGGTGVDDVPD.

The protein belongs to the UPF0161 family.

The protein resides in the cell inner membrane. In terms of biological role, could be involved in insertion of integral membrane proteins into the membrane. This Dinoroseobacter shibae (strain DSM 16493 / NCIMB 14021 / DFL 12) protein is Putative membrane protein insertion efficiency factor.